The sequence spans 388 residues: Sulfate adenylyltransferase (388 aa).

The protein belongs to the sulfate adenylyltransferase family.

The catalysed reaction is sulfate + ATP + H(+) = adenosine 5'-phosphosulfate + diphosphate. It functions in the pathway sulfur metabolism; hydrogen sulfide biosynthesis; sulfite from sulfate: step 1/3. This is Sulfate adenylyltransferase from Acaryochloris marina (strain MBIC 11017).